A 469-amino-acid polypeptide reads, in one-letter code: Programmed cell death protein 4 (469 aa).

The residue at position 1 (Met1) is an N-acetylmethionine. Residues 1–23 (MDIENEQTLNVNPTDPDNLSDSL) show a composition bias toward polar residues. Disordered regions lie at residues 1–37 (MDIE…EEIK) and 58–128 (KAKR…GTPG). Residue Ser25 is modified to Phosphoserine. Positions 58–64 (KAKRRLR) match the Nuclear localization signal motif. Position 67 is a phosphoserine; by PKB and RPS6KB1 (Ser67). 5 positions are modified to phosphoserine: Ser68, Ser71, Ser76, Ser78, and Ser94. A Phosphodegron motif is present at residues 70–76 (DSGRGDS). Over residues 114–125 (KKGGAGGKGVWG) the composition is skewed to gly residues. Tyr152 carries the post-translational modification Phosphotyrosine. The region spanning 163-284 (AFEKTLTPII…CNTYIDSYKG (122 aa)) is the MI 1 domain. Phosphoserine is present on residues Ser313 and Ser317. One can recognise an MI 2 domain in the interval 326–449 (HLVKEIDMLL…SKQLRDLCPS (124 aa)). The short motif at 448-454 (PSRGRKR) is the Nuclear localization signal element. Ser457 bears the Phosphoserine; by PKB mark.

The protein belongs to the PDCD4 family. Interacts (via MI domains) with EIF4A1 and EIF4A2 (via N-terminal domain). Heterotrimer with EIF4A1; one molecule of PDCD4 binds two molecules of EIF4A1. Interacts with EIF4G1. May form a complex with EIF4A1 and EIF4G1. The interaction between PDCD4 and EIF4A1 interferes with the interaction between EIF4A1 and EIF4G. When phosphorylated, interacts with BTRC and FBXW11. Polyubiquitinated, leading to its proteasomal degradation. Rapidly degraded in response to mitogens. Phosphorylation of the phosphodegron promotes interaction with BTRC and proteasomal degradation. Post-translationally, phosphorylated at Ser-67 by RPS6KB1 in response to mitogens; phosphorylation promotes proteasomal degradation of PDCD4. In terms of tissue distribution, expressed ubiquitously. Highyly expressed in thymus and liver. Moderately expressed in brain, kidney and spleen; weakly in lung and heart. Expression is up- or down-regulated in response to apoptosis inducers. Regulated by many programmed cell death-inducing stimuli.

Its subcellular location is the nucleus. It localises to the cytoplasm. Its function is as follows. Inhibits translation initiation and cap-dependent translation. May excert its function by hindering the interaction between EIF4A1 and EIF4G. Inhibits the helicase activity of EIF4A. Modulates the activation of JUN kinase. Down-regulates the expression of MAP4K1, thus inhibiting events important in driving invasion, namely, MAPK85 activation and consequent JUN-dependent transcription. May play a role in apoptosis. Tumor suppressor. Inhibits tumor promoter-induced neoplastic transformation. Binds RNA. This chain is Programmed cell death protein 4 (Pdcd4), found in Mus musculus (Mouse).